Reading from the N-terminus, the 339-residue chain is UDP-N-acetylglucosamine--N-acetylmuramyl-(pentapeptide) pyrophosphoryl-undecaprenol N-acetylglucosamine transferase (339 aa).

UDP-N-acetyl-alpha-D-glucosamine is bound by residues 11–13, asparagine 127, arginine 170, serine 188, isoleucine 235, and glutamine 280; that span reads TGG.

Belongs to the glycosyltransferase 28 family. MurG subfamily.

It is found in the cell inner membrane. It carries out the reaction di-trans,octa-cis-undecaprenyl diphospho-N-acetyl-alpha-D-muramoyl-L-alanyl-D-glutamyl-meso-2,6-diaminopimeloyl-D-alanyl-D-alanine + UDP-N-acetyl-alpha-D-glucosamine = di-trans,octa-cis-undecaprenyl diphospho-[N-acetyl-alpha-D-glucosaminyl-(1-&gt;4)]-N-acetyl-alpha-D-muramoyl-L-alanyl-D-glutamyl-meso-2,6-diaminopimeloyl-D-alanyl-D-alanine + UDP + H(+). The protein operates within cell wall biogenesis; peptidoglycan biosynthesis. In terms of biological role, cell wall formation. Catalyzes the transfer of a GlcNAc subunit on undecaprenyl-pyrophosphoryl-MurNAc-pentapeptide (lipid intermediate I) to form undecaprenyl-pyrophosphoryl-MurNAc-(pentapeptide)GlcNAc (lipid intermediate II). The polypeptide is UDP-N-acetylglucosamine--N-acetylmuramyl-(pentapeptide) pyrophosphoryl-undecaprenol N-acetylglucosamine transferase (Thermotoga neapolitana (strain ATCC 49049 / DSM 4359 / NBRC 107923 / NS-E)).